The primary structure comprises 515 residues: ADP,ATP carrier protein 1 (515 aa).

12 helical membrane passes run 24–44, 62–82, 93–113, 124–144, 149–169, 184–204, 226–246, 286–306, 329–349, 358–378, 383–403, and 465–485; these read LKKVLPMFLMFFCITFNYTVL, AIPFIKFWLVVPCAIIFMLIY, ALFYAVGTPFLIFFALFPTVI, EFADRLQAILPPGLLGLVAIL, FAAFYVLAELWGSVMLSLMFW, FYALFGIGANISLLASGRAIV, LLMAMTIVSGLVLMASYWWIN, YILLLALLVIAYGICINLIEV, FSFWTGVVSVLIMLFVGGNVI, ALVTPVMVLLTGIVFFALVIF, SGLVAMFGTTPLMLAVVVGAI, and IGAMTPYLAVILLFIIAIWLV.

It belongs to the ADP/ATP translocase tlc family.

It is found in the cell membrane. The polypeptide is ADP,ATP carrier protein 1 (tlcA) (Chlamydia pneumoniae (Chlamydophila pneumoniae)).